The sequence spans 375 residues: Putative F-box protein At5g52620 (375 aa).

Positions 5–52 (GKSDPIPIDIILDILSRLSTNSIAKFGLASKFCGSILRGQDFIELFLI) constitute an F-box domain.

This Arabidopsis thaliana (Mouse-ear cress) protein is Putative F-box protein At5g52620.